A 274-amino-acid chain; its full sequence is Long chain fatty acid elongase 6 (274 aa).

Over 1-30 the chain is Extracellular; the sequence is MPQGEVSFFEVLTTAPFSHELSKKHIAQTQ. A helical membrane pass occupies residues 31–51; sequence YAAFWISMAYVVVIFGLKAVM. Over 52 to 69 the chain is Cytoplasmic; that stretch reads TNRKPFDLTGPLNLWNAG. A helical transmembrane segment spans residues 70–90; it reads LAIFSTLGSLATTFGLLHEFF. Over 91–111 the chain is Extracellular; the sequence is SRGFFESYIHIGDFYNGLSGM. Residues 112 to 132 traverse the membrane as a helical segment; it reads FTWLFVLSKVAEFGDTLFIIL. Residues 133-135 lie on the Cytoplasmic side of the membrane; the sequence is RKK. The chain crosses the membrane as a helical span at residues 136–156; that stretch reads PLMFLHWYHHVLTMNYAFMSF. The Extracellular segment spans residues 157–159; that stretch reads EAN. A helical transmembrane segment spans residues 160-180; sequence LGFNTWITWMNFSVHSIMYGY. Over 181 to 202 the chain is Cytoplasmic; it reads YMLRSFGVKVPAWIAKNITTMQ. Residues 203-223 form a helical membrane-spanning segment; it reads ILQFVITHFILFHVGYLAVTG. Residues 224–230 are Extracellular-facing; the sequence is QSVDSTP. A helical membrane pass occupies residues 231-251; it reads GYYWFCLLMEISYVVLFGNFY. The Cytoplasmic portion of the chain corresponds to 252-274; sequence YQSYIKGGGKKFNAEKKTEKKIE.

It belongs to the ELO family. In terms of tissue distribution, expressed in the gut, neurons, pharynx and muscles of the vulva.

It is found in the membrane. The catalysed reaction is isopentadecanoyl-CoA + malonyl-CoA + H(+) = 3-oxoisoheptadecanoyl-CoA + CO2 + CoA. It participates in lipid metabolism; fatty acid biosynthesis. Its function is as follows. Catalyzes the first and rate-limiting reaction of the four reactions that constitute the long-chain fatty acids elongation cycle. Uses malonyl-CoA to add 2 carbons per cycle to the chain of long-chain fatty acids. Condensing enzyme required for the formation of isoheptadecanoate (C17iso), which plays critical roles in animal development and growth. The protein is Long chain fatty acid elongase 6 (elo-6) of Caenorhabditis elegans.